We begin with the raw amino-acid sequence, 162 residues long: 2-C-methyl-D-erythritol 2,4-cyclodiphosphate synthase (162 aa).

Residues Asp12 and His14 each contribute to the a divalent metal cation site. 4-CDP-2-C-methyl-D-erythritol 2-phosphate is bound by residues 12–14 (DVH) and 38–39 (HS). His46 serves as a coordination point for a divalent metal cation. Residues 60-62 (DIG), 65-69 (FPDTD), and Arg146 contribute to the 4-CDP-2-C-methyl-D-erythritol 2-phosphate site.

The protein belongs to the IspF family. In terms of assembly, homotrimer. It depends on a divalent metal cation as a cofactor.

The enzyme catalyses 4-CDP-2-C-methyl-D-erythritol 2-phosphate = 2-C-methyl-D-erythritol 2,4-cyclic diphosphate + CMP. The protein operates within isoprenoid biosynthesis; isopentenyl diphosphate biosynthesis via DXP pathway; isopentenyl diphosphate from 1-deoxy-D-xylulose 5-phosphate: step 4/6. Its function is as follows. Involved in the biosynthesis of isopentenyl diphosphate (IPP) and dimethylallyl diphosphate (DMAPP), two major building blocks of isoprenoid compounds. Catalyzes the conversion of 4-diphosphocytidyl-2-C-methyl-D-erythritol 2-phosphate (CDP-ME2P) to 2-C-methyl-D-erythritol 2,4-cyclodiphosphate (ME-CPP) with a corresponding release of cytidine 5-monophosphate (CMP). This chain is 2-C-methyl-D-erythritol 2,4-cyclodiphosphate synthase, found in Bordetella parapertussis (strain 12822 / ATCC BAA-587 / NCTC 13253).